The following is a 298-amino-acid chain: Protoheme IX farnesyltransferase (298 aa).

A run of 9 helical transmembrane segments spans residues 26–46 (VVSLIVFTAVIGMFLSVPGAV), 52–72 (IFGTVGISLVAGAAAALNCLV), 93–113 (VSVPETLFFLVLIGGFGLFML), 120–140 (LTMWLTLGTFVGYAIIYTVIL), 148–168 (IVIGGASGAMPPVLGWAAVTG), 174–194 (ALLLFLIIFAWTPPHFWALAL), 219–239 (LHVLLYTIILCVVTVLPYLTQ), 241–261 (SGLIYLGSVLILDAIFFYYAI), and 278–298 (YSIAYLALLFTALLVDHYFYF).

It belongs to the UbiA prenyltransferase family. Protoheme IX farnesyltransferase subfamily.

It localises to the cell inner membrane. It carries out the reaction heme b + (2E,6E)-farnesyl diphosphate + H2O = Fe(II)-heme o + diphosphate. Its pathway is porphyrin-containing compound metabolism; heme O biosynthesis; heme O from protoheme: step 1/1. Converts heme B (protoheme IX) to heme O by substitution of the vinyl group on carbon 2 of heme B porphyrin ring with a hydroxyethyl farnesyl side group. This Nitrosomonas europaea (strain ATCC 19718 / CIP 103999 / KCTC 2705 / NBRC 14298) protein is Protoheme IX farnesyltransferase.